Reading from the N-terminus, the 96-residue chain is Putative regulatory protein DET0036 (96 aa).

The protein belongs to the RemA family.

This is Putative regulatory protein DET0036 from Dehalococcoides mccartyi (strain ATCC BAA-2266 / KCTC 15142 / 195) (Dehalococcoides ethenogenes (strain 195)).